The chain runs to 195 residues: dTTP/UTP pyrophosphatase (195 aa).

Asp70 (proton acceptor) is an active-site residue.

This sequence belongs to the Maf family. YhdE subfamily. The cofactor is a divalent metal cation.

Its subcellular location is the cytoplasm. The enzyme catalyses dTTP + H2O = dTMP + diphosphate + H(+). It carries out the reaction UTP + H2O = UMP + diphosphate + H(+). Its function is as follows. Nucleoside triphosphate pyrophosphatase that hydrolyzes dTTP and UTP. May have a dual role in cell division arrest and in preventing the incorporation of modified nucleotides into cellular nucleic acids. This chain is dTTP/UTP pyrophosphatase, found in Methanococcoides burtonii (strain DSM 6242 / NBRC 107633 / OCM 468 / ACE-M).